Here is a 711-residue protein sequence, read N- to C-terminus: Ribosomal RNA large subunit methyltransferase K/L (711 aa).

The THUMP domain occupies 43–154; it reads LGYRITLWSR…RGQITIGLNF (112 aa).

This sequence belongs to the methyltransferase superfamily. RlmKL family.

It is found in the cytoplasm. It catalyses the reaction guanosine(2445) in 23S rRNA + S-adenosyl-L-methionine = N(2)-methylguanosine(2445) in 23S rRNA + S-adenosyl-L-homocysteine + H(+). The catalysed reaction is guanosine(2069) in 23S rRNA + S-adenosyl-L-methionine = N(2)-methylguanosine(2069) in 23S rRNA + S-adenosyl-L-homocysteine + H(+). Specifically methylates the guanine in position 2445 (m2G2445) and the guanine in position 2069 (m7G2069) of 23S rRNA. The sequence is that of Ribosomal RNA large subunit methyltransferase K/L from Shewanella sediminis (strain HAW-EB3).